A 131-amino-acid polypeptide reads, in one-letter code: Bacteriohemerythrin (131 aa).

Fe cation is bound by residues H22, H58, E62, H77, H81, H117, and D122.

This sequence belongs to the hemerythrin family. As to quaternary structure, monomer.

Oxygen-binding protein. May be involved in a storage mechanism or for delivery to oxygen-requiring enzymes. The oxygen-binding site contains two iron atoms. The protein is Bacteriohemerythrin of Methylococcus capsulatus (strain ATCC 33009 / NCIMB 11132 / Bath).